Consider the following 244-residue polypeptide: Large ribosomal subunit protein uL30A (244 aa).

A disordered region spans residues 1–26 (MAAEKILTPESQLKKSKAQQKTAEQV).

It belongs to the universal ribosomal protein uL30 family. In terms of assembly, component of the large ribosomal subunit (LSU). Mature yeast ribosomes consist of a small (40S) and a large (60S) subunit. The 40S small subunit contains 1 molecule of ribosomal RNA (18S rRNA) and 33 different proteins (encoded by 57 genes). The large 60S subunit contains 3 rRNA molecules (25S, 5.8S and 5S rRNA) and 46 different proteins (encoded by 81 genes).

Its subcellular location is the cytoplasm. Functionally, component of the ribosome, a large ribonucleoprotein complex responsible for the synthesis of proteins in the cell. The small ribosomal subunit (SSU) binds messenger RNAs (mRNAs) and translates the encoded message by selecting cognate aminoacyl-transfer RNA (tRNA) molecules. The large subunit (LSU) contains the ribosomal catalytic site termed the peptidyl transferase center (PTC), which catalyzes the formation of peptide bonds, thereby polymerizing the amino acids delivered by tRNAs into a polypeptide chain. The nascent polypeptides leave the ribosome through a tunnel in the LSU and interact with protein factors that function in enzymatic processing, targeting, and the membrane insertion of nascent chains at the exit of the ribosomal tunnel. The chain is Large ribosomal subunit protein uL30A from Saccharomyces cerevisiae (strain ATCC 204508 / S288c) (Baker's yeast).